The sequence spans 115 residues: uncharacterized protein (115 aa).

This is an uncharacterized protein from Schizosaccharomyces pombe (strain 972 / ATCC 24843) (Fission yeast).